The sequence spans 154 residues: Cold shock domain-containing protein C2 (154 aa).

2 disordered regions span residues M1–W22 and E36–A62. The residue at position 19 (S19) is a Phosphoserine. Residues V69 to T136 enclose the CSD domain.

In terms of tissue distribution, brain-specific. Expression restricted to the pyramidal neurons of the cerebral cortex and in the Purkinje cells of the cerebellum.

It localises to the nucleus. Its subcellular location is the cytoplasm. In terms of biological role, RNA-binding factor which binds specifically to the very 3'-UTR ends of both histone H1 and H3.3 mRNAs, encompassing the polyadenylation signal. Might play a central role in the negative regulation of histone variant synthesis in the developing brain. The protein is Cold shock domain-containing protein C2 (Csdc2) of Rattus norvegicus (Rat).